The primary structure comprises 319 residues: Pantothenate kinase (319 aa).

101-108 (GSVAVGKS) is a binding site for ATP.

The protein belongs to the prokaryotic pantothenate kinase family.

It localises to the cytoplasm. It catalyses the reaction (R)-pantothenate + ATP = (R)-4'-phosphopantothenate + ADP + H(+). The protein operates within cofactor biosynthesis; coenzyme A biosynthesis; CoA from (R)-pantothenate: step 1/5. The protein is Pantothenate kinase of Clavibacter sepedonicus (Clavibacter michiganensis subsp. sepedonicus).